Consider the following 207-residue polypeptide: 2,3-bisphosphoglycerate-dependent phosphoglycerate mutase (207 aa).

Residues 10 to 17 (RHGQSEWN), 23 to 24 (TG), R62, 89 to 92 (ERDY), K100, 116 to 117 (RR), and 160 to 161 (GN) contribute to the substrate site. H11 acts as the Tele-phosphohistidine intermediate in catalysis. The active-site Proton donor/acceptor is E89.

The protein belongs to the phosphoglycerate mutase family. BPG-dependent PGAM subfamily. Homodimer.

The enzyme catalyses (2R)-2-phosphoglycerate = (2R)-3-phosphoglycerate. The protein operates within carbohydrate degradation; glycolysis; pyruvate from D-glyceraldehyde 3-phosphate: step 3/5. Its function is as follows. Catalyzes the interconversion of 2-phosphoglycerate and 3-phosphoglycerate. In Bradyrhizobium sp. (strain ORS 278), this protein is 2,3-bisphosphoglycerate-dependent phosphoglycerate mutase.